We begin with the raw amino-acid sequence, 349 residues long: Nuclear distribution protein nudE homolog 1 (349 aa).

Residues 23–189 adopt a coiled-coil conformation; the sequence is AMKYKTCSEE…ELAVQQKQEK (167 aa). Residues 182 to 201 are disordered; sequence AVQQKQEKPKSNMGSPETER.

Belongs to the nudE family. In terms of assembly, self-associates. Interacts with pafah1b1. Post-translationally, phosphorylated in mitosis.

It localises to the cytoplasm. Its subcellular location is the cytoskeleton. It is found in the microtubule organizing center. The protein resides in the centrosome. The protein localises to the spindle. It localises to the chromosome. Its subcellular location is the centromere. It is found in the kinetochore. The protein resides in the cleavage furrow. The protein localises to the cytoplasmic vesicle membrane. Functionally, required for centrosome duplication and formation and function of the mitotic spindle. The polypeptide is Nuclear distribution protein nudE homolog 1 (nde1) (Xenopus tropicalis (Western clawed frog)).